We begin with the raw amino-acid sequence, 1245 residues long: TAL effector protein Brg11 (1245 aa).

Disordered regions lie at residues 1-87 (MRIG…LVPE) and 173-205 (CPQA…PTFL). Residues 67-87 (PRRPLPVAPASAPPAPSLVPE) are compositionally biased toward pro residues. Residues 185 to 191 (RSARARR) carry the Nuclear localization signal 1 motif. The stretch at 286-320 (LTRAHIVDIARQRSGDLALQALLPVATALTAAPLR) is one Cryptic repeat -1 repeat. The Cryptic repeat 0 repeat unit spans residues 321–354 (LSASQIATVAQYGERPAIQALYRLRRKLTRAPLH). Core repeat repeat units follow at residues 355–389 (LTPQ…APYR), 390–424 (LSTE…APYV), 425–459 (LDTE…APYA), 460–494 (LSTE…APYA), 495–529 (LSTE…VPYA), 530–564 (LSTE…APYA), 565–599 (LSTA…APYG), 600–634 (LSTE…APYA), 635–669 (LSTE…APYA), 670–704 (LSTA…APYA), 705–739 (LSTE…APYA), 740–774 (LNTE…APYA), 775–809 (LSTA…APYA), 810–844 (LSTE…APYG), 845–879 (LSTA…TPYD), and 880–914 (LNTA…APYA). The stretch at 915–948 (LSTAQVVAIACISGQQALEAIEAHMPTLRQASHS) is one Cryptic repeat +1 repeat. Residues 949-982 (LSPERVAAIACIGGRSAVEAVRQGLPVKAIRRIR) form a Cryptic repeat +2 repeat. Short sequence motifs (nuclear localization signal) lie at residues 980 to 983 (RIRR), 1108 to 1111 (HRKR), and 1145 to 1148 (RRKR). Residues 1096–1138 (SPGMAGQSACSPHRKRPAETAIAPRSIRRSPNNAGQPSEPWPD) form a disordered region. Residues 1237-1245 (DWLLQILET) are activation domain.

Belongs to the transcription activator-like effector (TALE) family. RipTAL/RTL subfamily.

It localises to the secreted. The protein resides in the host nucleus. Its function is as follows. Exported into plant cells, where it is targeted to the nucleus and probably acts as a transcription factor. Binds DNA in a sequence-specific manner. May contribute to plant pathogenicity. The chain is TAL effector protein Brg11 from Ralstonia nicotianae (strain ATCC BAA-1114 / GMI1000) (Ralstonia solanacearum).